The following is a 184-amino-acid chain: ATP synthase subunit b, chloroplastic (184 aa).

Residues 27–49 traverse the membrane as a helical segment; that stretch reads LATNPINLSVVLGVLIFFGKGVL.

Belongs to the ATPase B chain family. In terms of assembly, F-type ATPases have 2 components, F(1) - the catalytic core - and F(0) - the membrane proton channel. F(1) has five subunits: alpha(3), beta(3), gamma(1), delta(1), epsilon(1). F(0) has four main subunits: a(1), b(1), b'(1) and c(10-14). The alpha and beta chains form an alternating ring which encloses part of the gamma chain. F(1) is attached to F(0) by a central stalk formed by the gamma and epsilon chains, while a peripheral stalk is formed by the delta, b and b' chains.

It is found in the plastid. The protein localises to the chloroplast thylakoid membrane. Functionally, f(1)F(0) ATP synthase produces ATP from ADP in the presence of a proton or sodium gradient. F-type ATPases consist of two structural domains, F(1) containing the extramembraneous catalytic core and F(0) containing the membrane proton channel, linked together by a central stalk and a peripheral stalk. During catalysis, ATP synthesis in the catalytic domain of F(1) is coupled via a rotary mechanism of the central stalk subunits to proton translocation. Its function is as follows. Component of the F(0) channel, it forms part of the peripheral stalk, linking F(1) to F(0). This is ATP synthase subunit b, chloroplastic from Buxus microphylla (Littleleaf boxwood).